Consider the following 197-residue polypeptide: FMN-dependent NADH:quinone oxidoreductase (197 aa).

FMN is bound by residues Ser-10, 16–18 (SKS), and 96–99 (MYNF).

This sequence belongs to the azoreductase type 1 family. As to quaternary structure, homodimer. The cofactor is FMN.

It catalyses the reaction 2 a quinone + NADH + H(+) = 2 a 1,4-benzosemiquinone + NAD(+). It carries out the reaction N,N-dimethyl-1,4-phenylenediamine + anthranilate + 2 NAD(+) = 2-(4-dimethylaminophenyl)diazenylbenzoate + 2 NADH + 2 H(+). Quinone reductase that provides resistance to thiol-specific stress caused by electrophilic quinones. Its function is as follows. Also exhibits azoreductase activity. Catalyzes the reductive cleavage of the azo bond in aromatic azo compounds to the corresponding amines. In Marinomonas sp. (strain MWYL1), this protein is FMN-dependent NADH:quinone oxidoreductase.